The chain runs to 465 residues: Protein maelstrom (465 aa).

Positions alanine 2–asparagine 69 form a DNA-binding region, HMG box. Disordered regions lie at residues asparagine 373–proline 394 and serine 419–serine 443. Low complexity predominate over residues serine 381–serine 391. Residues arginine 422–asparagine 433 are compositionally biased toward basic and acidic residues.

The protein belongs to the maelstrom family.

It is found in the cytoplasm. Its subcellular location is the nucleus. In terms of biological role, involved both in the piRNA and miRNA metabolic processes. As a component of the meiotic nuage, plays a central role during oogenesis by repressing transposable elements and preventing their mobilization, which is essential for the germline integrity. Repression of transposable elements is mediated via the piRNA metabolic process, which mediates the repression of transposable elements during meiosis by forming complexes composed of piRNAs and Piwi proteins and governs the repression of transposons. As a nuclear component, it is required for proper differentiation in the germline stem cell (GSC) lineage by repressing microRNA-7 (miR-7), thereby acting as an indirect regulator of bag-of-marbles (Bam). Acts by binding to the promoter of miR-7 gene and repressing its expression; miR-7 repression alleviates the Bam repression by miR-7, thereby allowing differentiation in the germline stem cell (GSC) lineage. In Drosophila erecta (Fruit fly), this protein is Protein maelstrom (mael).